The following is a 127-amino-acid chain: Prefoldin subunit 6 (127 aa).

Ala-2 carries the N-acetylalanine modification. The residue at position 21 (Lys-21) is an N6-acetyllysine. The residue at position 66 (Lys-66) is an N6-acetyllysine; alternate. A Glycyl lysine isopeptide (Lys-Gly) (interchain with G-Cter in SUMO1); alternate cross-link involves residue Lys-66. A Glycyl lysine isopeptide (Lys-Gly) (interchain with G-Cter in SUMO2); alternate cross-link involves residue Lys-66.

This sequence belongs to the prefoldin subunit beta family. In terms of assembly, heterohexamer of two PFD-alpha type and four PFD-beta type subunits. Component of the PAQosome complex which is responsible for the biogenesis of several protein complexes and which consists of R2TP complex members RUVBL1, RUVBL2, RPAP3 and PIH1D1, URI complex members PFDN2, PFDN6, PDRG1, UXT and URI1 as well as ASDURF, POLR2E and DNAAF10/WDR92.

Functionally, binds specifically to cytosolic chaperonin (c-CPN) and transfers target proteins to it. Binds to nascent polypeptide chain and promotes folding in an environment in which there are many competing pathways for nonnative proteins. This chain is Prefoldin subunit 6 (Pfdn6), found in Mus musculus (Mouse).